The chain runs to 650 residues: DNA topoisomerase 3 (650 aa).

Residues 1–134 (MRLFIAEKPS…KLNQIQRCLI (134 aa)) form the Toprim domain. 3 residues coordinate Mg(2+): glutamate 7, aspartate 103, and aspartate 105. In terms of domain architecture, Topo IA-type catalytic spans 155 to 617 (FIPLATSALA…TLTNFLPELM (463 aa)). The segment at 194–199 (SVGRVQ) is interaction with DNA. Residue tyrosine 342 is the O-(5'-phospho-DNA)-tyrosine intermediate of the active site.

This sequence belongs to the type IA topoisomerase family. It depends on Mg(2+) as a cofactor.

The catalysed reaction is ATP-independent breakage of single-stranded DNA, followed by passage and rejoining.. Releases the supercoiling and torsional tension of DNA, which is introduced during the DNA replication and transcription, by transiently cleaving and rejoining one strand of the DNA duplex. Introduces a single-strand break via transesterification at a target site in duplex DNA. The scissile phosphodiester is attacked by the catalytic tyrosine of the enzyme, resulting in the formation of a DNA-(5'-phosphotyrosyl)-enzyme intermediate and the expulsion of a 3'-OH DNA strand. The free DNA strand then undergoes passage around the unbroken strand, thus removing DNA supercoils. Finally, in the religation step, the DNA 3'-OH attacks the covalent intermediate to expel the active-site tyrosine and restore the DNA phosphodiester backbone. This Pasteurella multocida (strain Pm70) protein is DNA topoisomerase 3.